The chain runs to 961 residues: Glycine dehydrogenase (decarboxylating) (961 aa).

Position 709 is an N6-(pyridoxal phosphate)lysine (K709).

Belongs to the GcvP family. As to quaternary structure, the glycine cleavage system is composed of four proteins: P, T, L and H. Requires pyridoxal 5'-phosphate as cofactor.

The catalysed reaction is N(6)-[(R)-lipoyl]-L-lysyl-[glycine-cleavage complex H protein] + glycine + H(+) = N(6)-[(R)-S(8)-aminomethyldihydrolipoyl]-L-lysyl-[glycine-cleavage complex H protein] + CO2. Its function is as follows. The glycine cleavage system catalyzes the degradation of glycine. The P protein binds the alpha-amino group of glycine through its pyridoxal phosphate cofactor; CO(2) is released and the remaining methylamine moiety is then transferred to the lipoamide cofactor of the H protein. This is Glycine dehydrogenase (decarboxylating) from Teredinibacter turnerae (strain ATCC 39867 / T7901).